The sequence spans 309 residues: Protein MAK16 homolog (309 aa).

Positions 194–309 (EADQFSEEEA…IEEETENQAN (116 aa)) are disordered. Acidic residues-rich tracts occupy residues 195–227 (ADQFSEEEADENEEEGEEEMEEEFEDDIDDIED) and 235–270 (VEGDDDEDDIDDEYENEPYQDDDEEDDDDDDDDDEE). The segment covering 275–293 (ITKKRGPTFKPTKKTPQKR) has biased composition (basic residues). Over residues 299-309 (EIEEETENQAN) the composition is skewed to acidic residues.

It belongs to the MAK16 family.

The protein localises to the nucleus. It is found in the nucleolus. This chain is Protein MAK16 homolog (mak16l), found in Dictyostelium discoideum (Social amoeba).